The chain runs to 238 residues: Uridylate kinase (238 aa).

12–15 (KLSG) contributes to the ATP binding site. UMP is bound at residue glycine 54. 2 residues coordinate ATP: glycine 55 and arginine 59. Residues aspartate 74 and 135-142 (TGNPFFTT) each bind UMP. 3 residues coordinate ATP: threonine 162, tyrosine 168, and aspartate 171.

This sequence belongs to the UMP kinase family. Homohexamer.

The protein resides in the cytoplasm. The catalysed reaction is UMP + ATP = UDP + ADP. It functions in the pathway pyrimidine metabolism; CTP biosynthesis via de novo pathway; UDP from UMP (UMPK route): step 1/1. With respect to regulation, inhibited by UTP. In terms of biological role, catalyzes the reversible phosphorylation of UMP to UDP. The chain is Uridylate kinase from Bordetella pertussis (strain Tohama I / ATCC BAA-589 / NCTC 13251).